Here is a 571-residue protein sequence, read N- to C-terminus: Acetolactate synthase large subunit (571 aa).

Glu51 contacts thiamine diphosphate. FAD contacts are provided by residues Arg153, 261-282, and 304-323; these read HGTY…IGVR and DIDP…IVGD. The tract at residues 394 to 474 is thiamine pyrophosphate binding; that stretch reads QHQMFTALYY…VLILNLNNSS (81 aa). The Mg(2+) site is built by Asp445 and Asn472.

Belongs to the TPP enzyme family. In terms of assembly, dimer of large and small chains. Requires Mg(2+) as cofactor. Thiamine diphosphate serves as cofactor.

It carries out the reaction 2 pyruvate + H(+) = (2S)-2-acetolactate + CO2. It participates in amino-acid biosynthesis; L-isoleucine biosynthesis; L-isoleucine from 2-oxobutanoate: step 1/4. It functions in the pathway amino-acid biosynthesis; L-valine biosynthesis; L-valine from pyruvate: step 1/4. The sequence is that of Acetolactate synthase large subunit (ilvI) from Buchnera aphidicola subsp. Acyrthosiphon pisum (strain APS) (Acyrthosiphon pisum symbiotic bacterium).